Reading from the N-terminus, the 349-residue chain is Prostaglandin reductase 1 (349 aa).

T18 carries the post-translational modification Phosphothreonine. S20 carries the post-translational modification Phosphoserine. NADP(+)-binding positions include 152–155, K178, Y193, N217, 239–245, 270–272, and N321; these read GAVG, CGAISMY, and FIF. At K178 the chain carries N6-(2-hydroxyisobutyryl)lysine; alternate. N6-acetyllysine; alternate is present on K178.

This sequence belongs to the NADP-dependent oxidoreductase L4BD family. Monomer or homodimer.

The protein resides in the cytoplasm. It catalyses the reaction 13,14-dihydro-15-oxo-prostaglandin E1 + NADP(+) = 15-oxoprostaglandin E1 + NADPH + H(+). The enzyme catalyses 13,14-dihydro-15-oxo-prostaglandin E2 + NADP(+) = 15-oxoprostaglandin E2 + NADPH + H(+). It carries out the reaction 13,14-dihydro-15-oxo-prostaglandin F1alpha + NADP(+) = 15-oxoprostaglandin F1alpha + NADPH + H(+). The catalysed reaction is 13,14-dihydro-15-oxo-PGF2alpha + NADP(+) = 15-oxoprostaglandin F2alpha + NADPH + H(+). It catalyses the reaction leukotriene B4 + NADP(+) = 12-oxo-leukotriene B4 + NADPH + H(+). The enzyme catalyses 20-hydroxy-leukotriene B4 + NADP(+) = 12-oxo-20-hydroxy-leukotriene B4 + NADPH + H(+). It carries out the reaction 6-trans-leukotriene B4 + NADP(+) = 12-oxo-(5S)-hydroxy-(6E,8E,10E,14Z)-eicosatetraenoate + NADPH + H(+). The catalysed reaction is (5S,12S)-dihydroxy-(6E,10E,12E,14Z)-eicosatetraenoate + NADP(+) = 12-oxo-(5S)-hydroxy-(6E,8E,10E,14Z)-eicosatetraenoate + NADPH + H(+). It catalyses the reaction an n-alkanal + NADP(+) = an alk-2-enal + NADPH + H(+). The enzyme catalyses hexanal + NADP(+) = (E)-hex-2-enal + NADPH + H(+). It carries out the reaction octanal + NADP(+) = (2E)-octenal + NADPH + H(+). The catalysed reaction is decanal + NADP(+) = (2E)-decenal + NADPH + H(+). It catalyses the reaction dodecanal + NADP(+) = (2E)-dodecenal + NADPH + H(+). The enzyme catalyses 4-hydroxynonanal + NADP(+) = (E)-4-hydroxynon-2-enal + NADPH + H(+). It carries out the reaction pentan-2-one + NADP(+) = (E)-pent-3-en-2-one + NADPH + H(+). The catalysed reaction is nonan-2-one + NADP(+) = (3E)-nonen-2-one + NADPH + H(+). Functionally, NAD(P)H-dependent oxidoreductase involved in metabolic inactivation of pro- and anti-inflammatory eicosanoids: prostaglandins (PG), leukotrienes (LT) and lipoxins (LX). Catalyzes with high efficiency the reduction of the 13,14 double bond of 15-oxoPGs, including 15-oxo-PGE1, 15-oxo-PGE2, 15-oxo-PGF1-alpha and 15-oxo-PGF2-alpha. Catalyzes with lower efficiency the oxidation of the hydroxyl group at C12 of LTB4 and its derivatives, converting them into biologically less active 12-oxo-LTB4 metabolites. Reduces 15-oxo-LXA4 to 13,14 dihydro-15-oxo-LXA4, enhancing neutrophil recruitment at the inflammatory site. Plays a role in metabolic detoxification of alkenals and ketones. Reduces alpha,beta-unsaturated alkenals and ketones, particularly those with medium-chain length, showing highest affinity toward (2E)-decenal and (3E)-3-nonen-2-one. May inactivate 4-hydroxy-2-nonenal, a cytotoxic lipid constituent of oxidized low-density lipoprotein particles. The sequence is that of Prostaglandin reductase 1 (PTGR1) from Oryctolagus cuniculus (Rabbit).